A 461-amino-acid polypeptide reads, in one-letter code: uncharacterized protein (461 aa).

Over residues 1 to 19 (MEKCSHESGRHSAENDGKY) the composition is skewed to basic and acidic residues. The segment at 1–21 (MEKCSHESGRHSAENDGKYDI) is disordered.

This sequence belongs to the CapA family.

Its function is as follows. Could be involved in the biosynthesis of a cell wall component. This is an uncharacterized protein from Sinorhizobium fredii (strain NBRC 101917 / NGR234).